We begin with the raw amino-acid sequence, 394 residues long: Probable tRNA sulfurtransferase (394 aa).

A THUMP domain is found at 61-168 (DETVATLSRI…PMINIYSEEI (108 aa)). ATP contacts are provided by residues 185-186 (LL), 210-211 (YF), Arg267, Gly289, and Gln298.

Belongs to the ThiI family.

The protein resides in the cytoplasm. It carries out the reaction [ThiI sulfur-carrier protein]-S-sulfanyl-L-cysteine + a uridine in tRNA + 2 reduced [2Fe-2S]-[ferredoxin] + ATP + H(+) = [ThiI sulfur-carrier protein]-L-cysteine + a 4-thiouridine in tRNA + 2 oxidized [2Fe-2S]-[ferredoxin] + AMP + diphosphate. It catalyses the reaction [ThiS sulfur-carrier protein]-C-terminal Gly-Gly-AMP + S-sulfanyl-L-cysteinyl-[cysteine desulfurase] + AH2 = [ThiS sulfur-carrier protein]-C-terminal-Gly-aminoethanethioate + L-cysteinyl-[cysteine desulfurase] + A + AMP + 2 H(+). It participates in cofactor biosynthesis; thiamine diphosphate biosynthesis. Its function is as follows. Catalyzes the ATP-dependent transfer of a sulfur to tRNA to produce 4-thiouridine in position 8 of tRNAs, which functions as a near-UV photosensor. Also catalyzes the transfer of sulfur to the sulfur carrier protein ThiS, forming ThiS-thiocarboxylate. This is a step in the synthesis of thiazole, in the thiamine biosynthesis pathway. The sulfur is donated as persulfide by IscS. This chain is Probable tRNA sulfurtransferase, found in Agathobacter rectalis (strain ATCC 33656 / DSM 3377 / JCM 17463 / KCTC 5835 / VPI 0990) (Eubacterium rectale).